We begin with the raw amino-acid sequence, 265 residues long: Phosphonates import ATP-binding protein PhnC 1 (265 aa).

An ABC transporter domain is found at leucine 3–glutamine 247. Glycine 36 to threonine 43 lines the ATP pocket.

The protein belongs to the ABC transporter superfamily. Phosphonates importer (TC 3.A.1.9.1) family. As to quaternary structure, the complex is composed of two ATP-binding proteins (PhnC), two transmembrane proteins (PhnE) and a solute-binding protein (PhnD).

Its subcellular location is the cell inner membrane. It catalyses the reaction phosphonate(out) + ATP + H2O = phosphonate(in) + ADP + phosphate + H(+). Part of the ABC transporter complex PhnCDE involved in phosphonates import. Responsible for energy coupling to the transport system. This is Phosphonates import ATP-binding protein PhnC 1 from Pseudomonas syringae pv. syringae (strain B728a).